The sequence spans 886 residues: Cytosolic carboxypeptidase-like protein 5 (886 aa).

In terms of domain architecture, Peptidase M14 spans 157–570; it reads YPFSYSDCQD…AMAIAALDMA (414 aa). H252 and E255 together coordinate Zn(2+). Residues 344–353 are compositionally biased toward polar residues; it reads AKSPTNQQPT. 2 disordered regions span residues 344–363 and 374–401; these read AKSP…APLS and EAHL…KTDP. H434 provides a ligand contact to Zn(2+). E516 functions as the Proton donor/acceptor in the catalytic mechanism. Disordered regions lie at residues 602 to 737 and 783 to 846; these read GLTS…RNMG and TRLQ…PAFS. Over residues 621–635 the composition is skewed to polar residues; the sequence is PKSNNSLPVSCSENA. The segment covering 643-654 has biased composition (low complexity); the sequence is STGTSTGGSSSS. Residues 655 to 666 show a composition bias toward polar residues; sequence QQNSPQMKNSPS. Residues 714 to 737 are compositionally biased toward low complexity; it reads STTSSLAPSPTLASSGPTSSRNMG. Over residues 805–815 the composition is skewed to polar residues; the sequence is SSPTSPIPQTR. Phosphoserine is present on S841.

Belongs to the peptidase M14 family. Zn(2+) is required as a cofactor. As to expression, widely expressed. Highly expressed in testis, and moderately in pituitary, brain, eye and kidney.

It localises to the cytoplasm. The protein localises to the cytosol. It is found in the nucleus. Its subcellular location is the cytoskeleton. The protein resides in the spindle. It localises to the midbody. The enzyme catalyses gamma-L-glutamyl-L-glutamyl-[protein] + H2O = L-glutamyl-[protein] + L-glutamate. It carries out the reaction (L-glutamyl)(n+1)-gamma-L-glutamyl-L-glutamyl-[protein] + H2O = (L-glutamyl)(n)-gamma-L-glutamyl-L-glutamyl-[protein] + L-glutamate. The catalysed reaction is C-terminal L-alpha-aminoacyl-L-glutamyl-[tubulin] + H2O = C-terminal L-alpha-aminoacyl-[tubulin] + L-glutamate. It catalyses the reaction C-terminal L-alpha-aminoacyl-L-glutamyl-L-glutamyl-[tubulin] + H2O = C-terminal L-alpha-aminoacyl-L-glutamyl-[tubulin] + L-glutamate. Functionally, metallocarboxypeptidase that mediates deglutamylation of tubulin and non-tubulin target proteins. Catalyzes the removal of polyglutamate side chains present on the gamma-carboxyl group of glutamate residues within the C-terminal tail of alpha- and beta-tubulin. Cleaves alpha- and gamma-linked polyglutamate tubulin side-chain, as well as the branching point glutamate. Also catalyzes the removal of alpha-linked glutamate residues from the carboxy-terminus of alpha-tubulin. Mediates deglutamylation of nucleotidyltransferase CGAS, leading to CGAS antiviral defense response activation. This Mus musculus (Mouse) protein is Cytosolic carboxypeptidase-like protein 5.